The following is an 85-amino-acid chain: uncharacterized protein (85 aa).

This sequence belongs to the ycf76 family.

The protein localises to the plastid. It is found in the chloroplast. This is an uncharacterized protein from Zea mays (Maize).